A 74-amino-acid polypeptide reads, in one-letter code: DUP240 protein DFP2 (74 aa).

Belongs to the DUP/COS family.

It localises to the cytoplasm. The protein localises to the membrane. This chain is DUP240 protein DFP2, found in Saccharomyces cerevisiae (strain ATCC 204508 / S288c) (Baker's yeast).